Consider the following 328-residue polypeptide: MPLHNLTRFPRLEFIGAPTPLEYLPRFSDYLGREIFIKRDDVTPMAMGGNKLRKLEFLAADALREGADTLITAGAIQSNHVRQTAAVAAKLGLHCVALLENPIGTTAENYLTNGNRLLLNLFNTQIEMCDALTDPNAQLEELATRVEAQGFRPYVIPVGGSNALGALGYVESALEIAQQCEGAVNISSVVVASGSAGTHAGLAVGLEHLMPESELIGVTVSRSVADQLPKVVNLQQAIAKELELTASAEILLWDDYFAPGYGVPNDEGMEAVKLLARLEGILLDPVYTGKAMAGLIDGISQKRFKDEGPILFIHTGGAPALFAYHPHV.

At Lys-51 the chain carries N6-(pyridoxal phosphate)lysine.

This sequence belongs to the ACC deaminase/D-cysteine desulfhydrase family. Homodimer. Pyridoxal 5'-phosphate is required as a cofactor.

The catalysed reaction is D-cysteine + H2O = hydrogen sulfide + pyruvate + NH4(+) + H(+). Functionally, catalyzes the alpha,beta-elimination reaction of D-cysteine and of several D-cysteine derivatives. It could be a defense mechanism against D-cysteine. The protein is D-cysteine desulfhydrase of Shigella boydii serotype 18 (strain CDC 3083-94 / BS512).